The sequence spans 369 residues: Serine/threonine-protein acetyltransferase HopZ1a (369 aa).

The segment at Met-1 to Gln-46 is disordered. A compositionally biased stretch (basic and acidic residues) spans Asp-19–Gln-46. 3 residues coordinate 1D-myo-inositol hexakisphosphate: Arg-49, Lys-53, and Arg-106. Residues His-150 and Glu-170 contribute to the active site. His-150 contacts CoA. CoA is bound by residues Ala-177 and Lys-211 to Thr-212. Residue Cys-216 is part of the active site. Residues Asn-222, Lys-226–Lys-229, and Lys-289–His-290 contribute to the 1D-myo-inositol hexakisphosphate site. Position 289 is an N6-acetyllysine; by autocatalysis (Lys-289). Ala-292–Thr-295 is a CoA binding site. 1D-myo-inositol hexakisphosphate contacts are provided by residues Ser-314–His-317 and Arg-326. Residues Arg-331 to Arg-334 and Ser-344 to Phe-348 each bind CoA. 1D-myo-inositol hexakisphosphate contacts are provided by Gln-358 and Arg-362.

Belongs to the acetyltransferase YopJ family. Interacts with host plant JAZ proteins (e.g. Glycine max JAZ1 and Arabidospis thaliana TIFY10B/JAZ2, TIFY11A/JAZ5, TIFY11B/JAZ6, TIFY5A/JAZ8 and TIFY3B/JAZ12) and triggers their degradation. Binds directly to SZE1 and SZE2 at the host plasma membrane; this interaction with a complex made of, at least, SZE1, BKN2/SZE2, ZAR1 and ZED1 triggers host immunity. 1D-myo-inositol hexakisphosphate is required as a cofactor. Post-translationally, autoacetylated at Lys-289; while autoacetylation at Lys-289 is required for virulence function to some extent, it is not essential.

The protein resides in the secreted. The protein localises to the host cell membrane. Its subcellular location is the host cytoplasm. It is found in the host cytoskeleton. It localises to the host nucleus. The enzyme catalyses L-threonyl-[protein] + acetyl-CoA = O-acetyl-L-threonyl-[protein] + CoA. The catalysed reaction is L-seryl-[protein] + acetyl-CoA = O-acetyl-L-seryl-[protein] + CoA. It carries out the reaction L-lysyl-[protein] + acetyl-CoA = N(6)-acetyl-L-lysyl-[protein] + CoA + H(+). With respect to regulation, 1D-myo-inositol hexakisphosphate activates protein-acetyltransferase activity via an allosteric mechanism: 1D-myo-inositol hexakisphosphate-binding induces a conformational rearrangement that stimulates the interaction with acetyl-CoA. Acetyltransferase activity is activated by phytic acid. In terms of biological role, serine/threonine-protein acetyltransferase translocated into infected cells, which impairs host microtubule network and host immunity by mediating acetylation of target proteins. Blocks secretion in host cells by mediating acetylation of host tubulin, thereby impairing host microbubule network. Impairs host cell immunity by mediating acetylation of host TIFY/JAZ transcription repressors (Arabidopsis thaliana TIFY10B/JAZ2, TIFY11A/JAZ5, TIFY11B/JAZ6, TIFY5A/JAZ8, TIFY9/JAZ10 and TIFY3B/JAZ12), thereby activating host jasmonate signaling. The chain is Serine/threonine-protein acetyltransferase HopZ1a from Pseudomonas syringae pv. syringae.